A 115-amino-acid chain; its full sequence is Divalent-cation tolerance protein CutA (115 aa).

Residues C19, H86, and H87 each coordinate Cu cation.

It belongs to the CutA family. As to quaternary structure, homotrimer. Cu cation serves as cofactor.

The protein localises to the cytoplasm. Its function is as follows. Involved in resistance toward heavy metals. The polypeptide is Divalent-cation tolerance protein CutA (Citrobacter koseri (strain ATCC BAA-895 / CDC 4225-83 / SGSC4696)).